Consider the following 199-residue polypeptide: Chaperone protein TorD (199 aa).

Belongs to the TorD/DmsD family. TorD subfamily.

It is found in the cytoplasm. In terms of biological role, involved in the biogenesis of TorA. Acts on TorA before the insertion of the molybdenum cofactor and, as a result, probably favors a conformation of the apoenzyme that is competent for acquiring the cofactor. The protein is Chaperone protein TorD of Actinobacillus pleuropneumoniae serotype 7 (strain AP76).